The primary structure comprises 253 residues: Succinate dehydrogenase iron-sulfur subunit (253 aa).

Residues cysteine 64, cysteine 69, and cysteine 84 each coordinate [2Fe-2S] cluster. The 4Fe-4S ferredoxin-type domain occupies 146–174; it reads RQWAYELSKCMTCGVCLEACPNVNSKSKF. [4Fe-4S] cluster is bound by residues cysteine 155, cysteine 158, and cysteine 161. Residues cysteine 165, cysteine 212, and cysteine 218 each coordinate [3Fe-4S] cluster. Residue cysteine 222 coordinates [4Fe-4S] cluster.

This sequence belongs to the succinate dehydrogenase/fumarate reductase iron-sulfur protein family. In terms of assembly, in B.subtilis succinate dehydrogenase forms part of an enzyme complex containing three subunits: a flavoprotein, an iron-sulfur protein and cytochrome b-558. [2Fe-2S] cluster serves as cofactor. The cofactor is [3Fe-4S] cluster. [4Fe-4S] cluster is required as a cofactor.

It carries out the reaction a quinone + succinate = fumarate + a quinol. It participates in carbohydrate metabolism; tricarboxylic acid cycle; fumarate from succinate (bacterial route): step 1/1. The chain is Succinate dehydrogenase iron-sulfur subunit (sdhB) from Bacillus subtilis (strain 168).